We begin with the raw amino-acid sequence, 553 residues long: ATP synthase F(1) complex subunit alpha, mitochondrial (553 aa).

A mitochondrion-targeting transit peptide spans 1 to 43; the sequence is MLSVRVAAAVARALPRRAGLVSKNALGSSFIAARNLHASNSRL. Residue Gln44 is modified to Pyrrolidone carboxylic acid. Residues Ser53 and Ser65 each carry the phosphoserine modification. Ser76 carries the phosphoserine; alternate modification. Ser76 is a glycosylation site (O-linked (GlcNAc) serine; alternate). Ser106 carries the post-translational modification Phosphoserine. Residues Lys123, Lys126, and Lys132 each carry the N6-acetyllysine modification. Residue Thr134 is modified to Phosphothreonine. Lys161 carries the N6-acetyllysine; alternate modification. An N6-succinyllysine; alternate modification is found at Lys161. Ser166 carries the phosphoserine modification. At Lys167 the chain carries N6-acetyllysine; alternate. The residue at position 167 (Lys167) is an N6-succinyllysine; alternate. At Ser184 the chain carries Phosphoserine. The residue at position 204 (Arg204) is an Omega-N-methylarginine. The ATP site is built by Gln215, Gly217, Lys218, Thr219, and Ser220. Position 219 (Thr219) interacts with Mg(2+). N6-acetyllysine; alternate is present on residues Lys230 and Lys239. An N6-succinyllysine; alternate mark is found at Lys230 and Lys239. Position 240 is an N6-acetyllysine (Lys240). Residues Lys261 and Lys305 each carry the N6-acetyllysine; alternate modification. Residues Lys261 and Lys305 each carry the N6-succinyllysine; alternate modification. Residue Asp312 coordinates Mg(2+). Lys427 carries the N6-acetyllysine; alternate modification. Position 427 is an N6-succinyllysine; alternate (Lys427). Lys434 is subject to N6-acetyllysine. Residues Gln473 and Gln475 each contribute to the ATP site. N6-acetyllysine; alternate occurs at positions 498, 506, 531, and 539. An N6-succinyllysine; alternate mark is found at Lys498, Lys506, Lys531, and Lys539. Position 541 is an N6-acetyllysine (Lys541).

This sequence belongs to the ATPase alpha/beta chains family. Homotrimer. Component of the ATP synthase complex composed at least of ATP5F1A/subunit alpha, ATP5F1B/subunit beta, ATP5MC1/subunit c (homooctomer), MT-ATP6/subunit a, MT-ATP8/subunit 8, ATP5ME/subunit e, ATP5MF/subunit f, ATP5MG/subunit g, ATP5MK/subunit k, ATP5MJ/subunit j, ATP5F1C/subunit gamma, ATP5F1D/subunit delta, ATP5F1E/subunit epsilon, ATP5PF/subunit F6, ATP5PB/subunit b, ATP5PD/subunit d, ATP5PO/subunit OSCP. ATP synthase complex consists of a soluble F(1) head domain (subunits alpha(3) and beta(3)) - the catalytic core - and a membrane F(0) domain - the membrane proton channel (subunits c, a, 8, e, f, g, k and j). These two domains are linked by a central stalk (subunits gamma, delta, and epsilon) rotating inside the F1 region and a stationary peripheral stalk (subunits F6, b, d, and OSCP). Interacts with ATPAF2. Interacts with HRG; the interaction occurs on the surface of T-cells and alters the cell morphology when associated with concanavalin (in vitro). Interacts with PLG (angiostatin peptide); the interaction inhibits most of the angiogenic properties of angiostatin. Interacts with BLOC1S1. Interacts with BCL2L1 isoform BCL-X(L); the interaction mediates the association of BCL2L1 isoform BCL-X(L) with the mitochondrial membrane F(1)F(0) ATP synthase and enhances neurons metabolic efficiency. Interacts with CLN5 and PPT1. Interacts with S100A1; this interaction increases F1-ATPase activity. Interacts with ABCB7; this interaction allows the regulation of cellular iron homeostasis and cellular reactive oxygen species (ROS) levels in cardiomyocytes. Post-translationally, acetylated on lysine residues. BLOC1S1 is required for acetylation. Heart muscle (at protein level). Heart and liver.

The protein resides in the mitochondrion inner membrane. The protein localises to the cell membrane. Subunit alpha, of the mitochondrial membrane ATP synthase complex (F(1)F(0) ATP synthase or Complex V) that produces ATP from ADP in the presence of a proton gradient across the membrane which is generated by electron transport complexes of the respiratory chain. ATP synthase complex consist of a soluble F(1) head domain - the catalytic core - and a membrane F(1) domain - the membrane proton channel. These two domains are linked by a central stalk rotating inside the F(1) region and a stationary peripheral stalk. During catalysis, ATP synthesis in the catalytic domain of F(1) is coupled via a rotary mechanism of the central stalk subunits to proton translocation. In vivo, can only synthesize ATP although its ATP hydrolase activity can be activated artificially in vitro. With the catalytic subunit beta (ATP5F1B), forms the catalytic core in the F(1) domain. Subunit alpha does not bear the catalytic high-affinity ATP-binding sites. The polypeptide is ATP synthase F(1) complex subunit alpha, mitochondrial (Bos taurus (Bovine)).